The chain runs to 154 residues: uncharacterized protein (154 aa).

The Zn(2+) site is built by C4, C7, C16, C19, C24, C28, H32, and C36. The HIT-type zinc finger occupies 4–36 (CSICNESEIKYKCPKCSFPYCSLPCWKIHQSQC).

This is an uncharacterized protein from Schizosaccharomyces pombe (strain 972 / ATCC 24843) (Fission yeast).